We begin with the raw amino-acid sequence, 2531 residues long: MGDISGSVDPSNMAYEPLAIVGMGMRLPGGIHTAEDFWNLLVEKRSSRCKVPSDRFNIEAFYSPSGRVGTVKMEHGHFLGPTDDLQHFDASFFSMSKKEVEILDPQQRMLLEVVYECMQNAGQSNWRGGNIGCYVGVWGEDWVDIHAKDSQDAGMYRISGGQDFAISNRVSYEYDLKGPSFTIKSGCSSSMIALHEAARAIQAGDCDGAIIAGTNLIISPTMSIAMTEQGVLSPDGACKSFDESADGYARGEAINAIYIKRLSDAIRDGDNIRSVIRATASNCDGKTPGITLPSSESHEAMMRRAYKEACLDPTQTAFVEAHGTGTKIGDPLEATAIARVFSSEKGVYIGSVKPNVGHSEGASGVTSIMKAVLALENRTIPPNINFSTPNPQIPFEASNMKVAVEPIPWPKVQAERASVNSFGIGGANAHVILDSPASMGISSTKRNTTNGLSVNGHSINGNSVNGHSVNGHSTNGHSINGNSVNGHSVNGNSVNGHSTNGHSINGHSANGNSINGHSVNGHSKPRPALLVLSATNTESLRANVVKHQQYIETNPEKLVNIEYNLCNRREHLSNRAFCVTDGLSTLQFSPLTKPKKTPTLVMVFTGQGAQWAEMGKELMADFPSFSQDIDLMNNTLSKLDHPPSWNIKEELLKHESVSCLSKAEFAQPLVTAIQVALVNLLRQFGVKPAAVVGHSSGEIAAAYAANAITANEAIIIAYYRGQVTKGFSRRGGMAAVGLGREDVMSFLNPGVSIACENSSSSVTLSGDEDALNATCEIIKTALPDVFLRPLKVEMAYHSHHMKELGEAYEALLRPHLKSTTPVVPFFSSVSGKVVSKSGTLDAAYWRSNLENPVLFNSAIKLILDTLAQDHLFLEIGPHSALAGPIRQILKANSRKNDTYVTALERGKDCGESILKMIGELYLQHISINFKQVAPNGTVLTDLPLYQWCHDQEYWKESRVSKQWRLRKYPNHEILGSRTVEGNELQPEWRNVLHLDNVPWLRDHQIINDVVFPCAGYLSMACEAIRQISASEDFTFRNIVIQTALVMSDSKSVEMITSLRPVRLTNTLNSVWWDFSISSYNGSLWIKHCGGQIRSGTDNPKFKLPRRIEDHPRSVPSPYPAMKKVGLNYGPTFQGLERLSALPKKMTASATLSKSELSESHYAIHPATIDHCLQLFIVSTCEGTLRNINKLCVPTSIDQLYICGGKSTSGIKAEACGAQTSTGTISGDVVAISGDAIILSLIGGQFSPIEEDSSDEDLDTVAGARLDWKPDLDFVQIDNLIRPRQQSTAATKTLEKFTLLSMIDIGRRISGLVTKSEYLEKFRSWINAQVERASEDRYNLVEDAQALTVLNAGERQMLIAELSKEISNSEVATSGELISRVVKNCEDIMVGKIDGIEVLLPENGLTHFYDSLEHRTDCIDFFTAAGHSKPNLRVLEIGSGTGGTSAVVLKGLTSTAQRMYSTYTYTDISSGFFVEAQERFKDYHGLEYKVLDISKDPTEQGFQEGSYDLIIAANVLHATPSLNTTLGHARKLLAEDGRLFLQELSPQVQFANLIMGVLPGWWLGEADGRANEPYISPERWAVELRKAGFSGCDATVYDAEQPYQFNANIISRPAKVDRIARRITLLYEPNLNIQQIKFSLENKGYSVDLCTIQEEPPAGQDIVSLLELETPMFEKISGTDLALFQRLVKNLGTNHLLWVTRSAQIESYDPRFGMVLGLARTLRSELSLSIATLEIDTVDEVAYNAITNVFDKLKNSSSVSDMNPDYEFVLSKGVVNIGRYHPVSVEQELAVSASQSQAVKLEIGRFGLLQTLRWVPDLQNKVGHDQVIVEPRCAGLNFKDVLVSMGIVSGDGLGLEGSGTVVGVGSEVTDFQVGDRVLYIDQNCFSTRTAIPALRCAKIPSTLSWEEAATMPCVYATVIHSLLNLGRIQKGQSVLIHSACGGIGLAAIQICQNIVGAQIYVTVGNEEKVHYLMDTFGISRDHIFNSRDTSFLPAIKAATNGRGVDVVLNSLSGELLHASWECVAEYGSMVEIGKRDFIGKAQLNMDLFESNRSFFGVDLAKFDAARCQLLLVQMMEFYEKGLIKPIAPMKVFEGAKVEDSFRYMQKGSHIGKIVVTIPEQNTDLPLASIVPKLKLNPDAGYLLVGGLGGLGRAVSTWMVERGARHLIFLSRSAGKSDQDQSFFRELESQDCTVQAFTGSVATFQDVQNAVQRASKPIKGVFQMSMVLNDKPFLEMSCSDWETSVLPKVEGTWHLHHALPKDLDFFVATSSLSGSFGNAGQANYAAANTFLDAFVQYRHSLGLPASVVDIGVMGDIGYVSRNAAIQESLRGAGTYFLQEQDFLDSLNWAVAKSAVKPSLPGQNQLLIGVRSSKSLSDPSNRVSFKRDARMGAYLNTGSSTSANTTNATDQLKSFMSSVETDSSILNVPASLDLVTNEIGVRIYTFMLQPIEDLDVSQTLAALGVDSLVTIEIRNWMKRSFGGLEFSTLEILNAGTIEALGLLTIEGLKRKYEMKDGEAKFSEREDTYLLMKAP.

The 421-residue stretch at 15–435 folds into the Ketosynthase family 3 (KS3) domain; sequence YEPLAIVGMG…GANAHVILDS (421 aa). Catalysis depends on for beta-ketoacyl synthase activity residues cysteine 187, histidine 322, and histidine 358. A disordered region spans residues 449-525; it reads TNGLSVNGHS…GHSVNGHSKP (77 aa). Over residues 453–503 the composition is skewed to low complexity; it reads SVNGHSINGNSVNGHSVNGHSTNGHSINGNSVNGHSVNGNSVNGHSTNGHS. Residues 505-521 are compositionally biased toward polar residues; that stretch reads NGHSANGNSINGHSVNG. The interval 602–909 is malonyl-CoA:ACP transacylase (MAT) domain; it reads MVFTGQGAQW…VTALERGKDC (308 aa). Residues 971 to 1099 form an N-terminal hotdog fold region; sequence HEILGSRTVE…GQIRSGTDNP (129 aa). The interval 971 to 1251 is dehydratase (DH) domain; sequence HEILGSRTVE…GGQFSPIEED (281 aa). The PKS/mFAS DH domain maps to 971–1254; that stretch reads HEILGSRTVE…FSPIEEDSSD (284 aa). The active-site Proton acceptor; for dehydratase activity is histidine 1003. A C-terminal hotdog fold region spans residues 1109–1254; that stretch reads DHPRSVPSPY…FSPIEEDSSD (146 aa). The active-site Proton donor; for dehydratase activity is aspartate 1169. The methyltransferase (CMet) domain stretch occupies residues 1419–1597; sequence DFFTAAGHSK…FSGCDATVYD (179 aa). The tract at residues 1806 to 2114 is enoyl reductase (ER) (ER) domain; that stretch reads GLLQTLRWVP…KGSHIGKIVV (309 aa). Positions 2139-2312 are ketoreductase (KR) domain; that stretch reads GYLLVGGLGG…ASVVDIGVMG (174 aa). Residues 2413–2505 enclose the Carrier domain; sequence MSSVETDSSI…ALGLLTIEGL (93 aa). Serine 2464 carries the post-translational modification O-(pantetheine 4'-phosphoryl)serine.

The protein operates within mycotoxin biosynthesis. Its function is as follows. Highly reducing polyketide synthase; part of the gene cluster that mediates the biosynthesis of pneumocandins, lipohexapeptides of the echinocandin family that prevent fungal cell wall formation by non-competitive inhibition of beta-1,3-glucan synthase. The 10,12-dimethylmyristoyl side chain is synthesized by the reducing polyketide synthase gloL/GLPKS4. The thioesterase gloN/GLHYD exclusively interacts with gloL/GLPKS4 to maintain turnover of the polyketide side chain. The 10R,12S-dimethylmyristic acid is then transferred to the first thiolation domain of the nonribosomal peptide synthetase gloA/GLNRPS4 by the acyl-AMP ligase gloD/GLligase, followed by its acylation to L-ornithine to trigger elongation of the cyclic hexapeptide. L-ornithine, 4R-hydroxyl-L-proline (generated from L-proline by the dioxygenase gloF/GLOXY2), 3S-hydroxyl-L-homotyrosine (generated by gloG/GLHtyB, gloH/GLHtyA, gloI/GLHtyC, gloJ/GLHtyD and hydroxylated at C-3 by the dioxygenase gloM/GLOXY1), 3R-hydroxyl-L-glutamine (generated from L-glutamine probably by the dioxygenase gloE/GLOXY3) and 3S-hydroxyl-L-proline (generated from L-proline by the dioxygenase gloF/GLOXY2 to yield pneumocandin B0), or 3S-hydroxyl-4S-methyl-L-proline (generated from L-leucine by the dioxygenase gloC/GLOXY4 to yield pneumocandin A0) are sequentially added to the growing chain. The last C domain of gloA/GLNRPS4 is proposed to be responsible for cyclization by condensation to form the peptide bond between L-ornithine and 3S-hydroxyl-4S-methyl-L-proline (for pneumocandin A0) or 3S-hydroxyl-L-proline (for pneumocandin B0). Finally, the subsequent C-4 hydroxylation of 3S-hydroxyl-L-homotyrosine and L-ornithine dihydroxylation at C-4 and C-5 are performed by the cytochrome P450 monooxygenases gloP/GLP450-1 and gloO/GLP450-2, respectively. This is Highly reducing polyketide synthase gloL from Glarea lozoyensis (strain ATCC 20868 / MF5171).